Reading from the N-terminus, the 294-residue chain is Bidirectional sugar transporter SWEET13 (294 aa).

The Extracellular portion of the chain corresponds to 1–7; it reads MALTNNL. Residues 8 to 28 form a helical membrane-spanning segment; it reads WAFVFGILGNIISFVVFLAPV. One can recognise a MtN3/slv 1 domain in the interval 10 to 97; sequence FVFGILGNII…VLFVSYANKK (88 aa). At 29–42 the chain is on the cytoplasmic side; it reads PTFVRICKKKSTEG. The chain crosses the membrane as a helical span at residues 43–63; it reads FQSLPYVSALFSAMLWIYYAM. The Extracellular portion of the chain corresponds to 64 to 69; it reads QKDGTA. The chain crosses the membrane as a helical span at residues 70–90; it reads FLLITINAFGCVIETIYIVLF. Topologically, residues 91–104 are cytoplasmic; it reads VSYANKKTRISTLK. Residues 105-125 form a helical membrane-spanning segment; that stretch reads VLGLLNFLGFAAIVLVCELLT. The Extracellular portion of the chain corresponds to 126-132; it reads KGSTREK. Residues 133 to 153 form a helical membrane-spanning segment; the sequence is VLGGICVGFSVSVFAAPLSIM. The MtN3/slv 2 domain maps to 133–216; sequence VLGGICVGFS…MILYIIFKYY (84 aa). At 154-166 the chain is on the cytoplasmic side; sequence RVVVRTRSVEFMP. The helical transmembrane segment at 167-187 threads the bilayer; the sequence is FSLSLFLTISAVTWLFYGLAI. The Extracellular segment spans residues 188–192; it reads KDFYV. The chain crosses the membrane as a helical span at residues 193–213; the sequence is ALPNVLGAFLGAVQMILYIIF. The Cytoplasmic portion of the chain corresponds to 214-294; sequence KYYKTPVAQK…NKDVQKQSQV (81 aa). The interval 273-294 is disordered; sequence KSQNMTDPKDQINKDVQKQSQV. Residues 279–294 show a composition bias toward basic and acidic residues; sequence DPKDQINKDVQKQSQV.

Belongs to the SWEET sugar transporter family. In terms of assembly, forms heterooligomers with SWEET1, SWEET3, SWEET6, SWEET7, SWEET8, SWEET9, SWEET11 and SWEET17. Expressed at low levels in leaves.

Its subcellular location is the cell membrane. Functionally, mediates both low-affinity uptake and efflux of sugar across the plasma membrane. Involved in nurturing the male gametophyte. The chain is Bidirectional sugar transporter SWEET13 from Arabidopsis thaliana (Mouse-ear cress).